The following is a 205-amino-acid chain: Histidine biosynthesis bifunctional protein HisIE (205 aa).

The segment at 1–115 (MIDIKELKFD…DEETEDGIEI (115 aa)) is phosphoribosyl-AMP cyclohydrolase. A phosphoribosyl-ATP pyrophosphohydrolase region spans residues 116–205 (LNKLYERIKG…YNELERRYKK (90 aa)).

In the N-terminal section; belongs to the PRA-CH family. The protein in the C-terminal section; belongs to the PRA-PH family.

The protein localises to the cytoplasm. It carries out the reaction 1-(5-phospho-beta-D-ribosyl)-ATP + H2O = 1-(5-phospho-beta-D-ribosyl)-5'-AMP + diphosphate + H(+). It catalyses the reaction 1-(5-phospho-beta-D-ribosyl)-5'-AMP + H2O = 1-(5-phospho-beta-D-ribosyl)-5-[(5-phospho-beta-D-ribosylamino)methylideneamino]imidazole-4-carboxamide. Its pathway is amino-acid biosynthesis; L-histidine biosynthesis; L-histidine from 5-phospho-alpha-D-ribose 1-diphosphate: step 2/9. It participates in amino-acid biosynthesis; L-histidine biosynthesis; L-histidine from 5-phospho-alpha-D-ribose 1-diphosphate: step 3/9. The protein is Histidine biosynthesis bifunctional protein HisIE of Caldanaerobacter subterraneus subsp. tengcongensis (strain DSM 15242 / JCM 11007 / NBRC 100824 / MB4) (Thermoanaerobacter tengcongensis).